Consider the following 99-residue polypeptide: Cystatin (99 aa).

The 97-residue stretch at 3–99 folds into the Cystatin domain; it reads GGLSPRSVSD…EEKLCGFQVW (97 aa). The short motif at 47–51 is the Secondary area of contact element; sequence QSVAG. C65 and C81 are joined by a disulfide.

The protein belongs to the cystatin family. In terms of tissue distribution, expressed by the venom gland.

Its subcellular location is the secreted. Its function is as follows. Inhibits various C1 cysteine proteases including cathepsin L (Ki is 0.1 nM), papain (Ki is 0.19 nM), cathepsin S (Ki is 1.2 nM), and cathepsin B (Ki is 2.5 nM). This protein has no toxic activity and its function in the venom is unknown. It may play a role as housekeeping or regulatory protein. In Naja atra (Chinese cobra), this protein is Cystatin.